The chain runs to 403 residues: Serine/threonine transporter SstT (403 aa).

A run of 9 helical transmembrane segments spans residues 14–34, 44–64, 79–99, 138–158, 175–195, 214–234, 295–315, 327–347, and 353–373; these read VTQIVIGLLAGIALALLAPAI, VFVSALKAVAPVLVFILVMAS, ILWLYLLGTFAAAVVAVVASM, ALLNANFIGVLTWAIGLGVAL, GVTLIVRVVIRFAPLGIFGLV, LAVLIGCMLFVALVMNPLIVF, MAGAAITITVLTLAAVHTLGI, VVAAVCACGASGVAGGSLLLI, and LFGIPSEIAMQVVAVGFIIGV.

The protein belongs to the dicarboxylate/amino acid:cation symporter (DAACS) (TC 2.A.23) family.

The protein resides in the cell inner membrane. The catalysed reaction is L-serine(in) + Na(+)(in) = L-serine(out) + Na(+)(out). It carries out the reaction L-threonine(in) + Na(+)(in) = L-threonine(out) + Na(+)(out). Functionally, involved in the import of serine and threonine into the cell, with the concomitant import of sodium (symport system). The sequence is that of Serine/threonine transporter SstT from Pseudomonas putida (strain ATCC 700007 / DSM 6899 / JCM 31910 / BCRC 17059 / LMG 24140 / F1).